A 386-amino-acid chain; its full sequence is MISHRNAIANIMQIVTYESTYQSDEPELCLGVLPQSHIYSLVVVSQASIWRGDGVVVLQGFELEQTLLAIQTNGIKRLWLVPPMLVAITKAPRIVESYDLSSVSVAAVGASGISKDVMATFGELLPACKIIQGYGMTETTGVVCFGNVEDSMDGSCGHLYPGYEARLIDGEGKDVESHNTPGELVLRSPSVVIGYYNDESATSEAMMDGGWLRTGDLVEIRQSEKGHEHVFVVDRVKELIKVRGLQVAPAELESHLILHPAVAEVAVIPVPDDRAGELPKAYIVRASGAELDEQVLRKELSQYVEGQFARHKHLDGGIEFLDSLPKTASGKMQRKTLKEKARTDAEARRQAREKAANGVHKVHVNGVKRPEKMEVFDLSSDDEDDD.

Residues 62–132 form an SBD1 region; the sequence is ELEQTLLAIQ…ELLPACKIIQ (71 aa). 107–115 lines the ATP pocket; that stretch reads AVGASGISK. The interval 133–195 is SBD2; it reads GYGMTETTGV…LRSPSVVIGY (63 aa). Residue Thr137 coordinates substrate. Positions 216 and 235 each coordinate ATP. CoA is bound by residues 243 to 245 and 313 to 316; these read RGL and HLDG. Lys331 is a binding site for ATP. A disordered region spans residues 352-386; the sequence is REKAANGVHKVHVNGVKRPEKMEVFDLSSDDEDDD.

Belongs to the ATP-dependent AMP-binding enzyme family.

Its pathway is secondary metabolite biosynthesis. Acyl-CoA ligase; part of the gene cluster that mediates the biosynthesis of the lipopeptide antibiotics leucinostatins that show extensive biological activities, including antimalarial, antiviral, antibacterial, antifungal, and antitumor activities, as well as phytotoxic. Leucinostatin A contains nine amino acid residues, including the unusual amino acid 4-methyl-L-proline (MePro), 2-amino-6-hydroxy-4-methyl-8-oxodecanoic acid (AHyMeOA), 3-hydroxyleucine (HyLeu), alpha-aminoisobutyric acid (AIB), beta-Ala, a 4-methylhex-2-enoic acid at the N-terminus as well as a N1,N1-dimethylpropane-1,2-diamine (DPD) at the C-terminus. The biosynthesis of leucinostatins is probably initiated with the assembly of 4-methylhex-2-enoic acid by a reducing PKS. Two reducing polyketide synthases, lcsB and lcsC, have been identified in the cluster and it is not clear which is the one that assembles 4-methylhex-2-enoic acid since both contain KS, AT, DH, cMT, ER, KR and ACP domains. The polyketide residue might be transferred to the NRPS lcsA, mediated by two additional enzymes, the acyl-CoA ligase lcsD and the thioesterase lcsE. The linear polyketide carboxylic acid, which is released from PKS, is converted to a CoA thioester by lcsD, and then lcsE hydrolyzes the thiol bond and shuttles the polyketide intermediate to lcsA. The C domain of the first module catalyzed the condensation of 4-methylhex-2-enoic acid and MePro carried by domain A1, followed by successive condensations of nine amino acids to trigger the elongation of the linear peptide. A5 and A6 domains of lcsA are proposed to incorporate leucine, A2 AHyMeOA, and A3 incorporates HyLeu. A4, A7 and A8 incorporate AIB. The AHyMeOA in leucinostatin A activated by the A2 might be produced by the second PKS (lcsB or lcsC) present within the cluster. The MePro is probably produced via leucine cyclization and may originate from a separate pathway, independent of the cluster. Another nonproteinogenic amino acid, beta-Ala, could be produced by an aspartic acid decarboxylase also localized outside of the cluster. Two candidates are VFPBJ_01400 and VFPBJ_10476. The final peptide scaffold may be released by the NAD(P)H-dependent thioester reductase (TE) at the C-terminal region of lcsA. Transamination of the lcsA product by the transaminase lcsP may produce DPD at the C-terminus. Further hydroxylation steps performed alternatively by the cytochrome P450 monooxygenases lcsI, lcsK and lcsN then yield the non-methylated leucinostatins precursor. It is also possible that leucines can be hydroxylated prior to their incorporation into the peptide. Varying extents of methylation then lead to the formation of leucinostatins A and B. The chain is Acyl-CoA ligase lcsD from Purpureocillium lilacinum (Paecilomyces lilacinus).